A 340-amino-acid polypeptide reads, in one-letter code: Glutamine synthetase (340 aa).

Residues 3-82 form the GS beta-grasp domain; the sequence is IKAEYIWIDG…LCEVLHTDLT (80 aa). One can recognise a GS catalytic domain in the interval 88–340; it reads TRALLRPVAE…CTELARREQI (253 aa). Mg(2+)-binding residues include Glu109, Glu111, Glu171, and Glu178. Glu276 is an L-glutamate binding site.

This sequence belongs to the glutamine synthetase family. Homooctamer and homotetramer. The cofactor is Mg(2+).

It is found in the cytoplasm. It carries out the reaction L-glutamate + NH4(+) + ATP = L-glutamine + ADP + phosphate + H(+). Its function is as follows. Catalyzes the ATP-dependent biosynthesis of glutamine from glutamate and ammonia. The chain is Glutamine synthetase from Streptomyces hygroscopicus.